Consider the following 1241-residue polypeptide: DNA-directed RNA polymerase subunit beta (1241 aa).

It belongs to the RNA polymerase beta chain family. The RNAP catalytic core consists of 2 alpha, 1 beta, 1 beta' and 1 omega subunit. When a sigma factor is associated with the core the holoenzyme is formed, which can initiate transcription.

The catalysed reaction is RNA(n) + a ribonucleoside 5'-triphosphate = RNA(n+1) + diphosphate. In terms of biological role, DNA-dependent RNA polymerase catalyzes the transcription of DNA into RNA using the four ribonucleoside triphosphates as substrates. The chain is DNA-directed RNA polymerase subunit beta from Clostridium botulinum (strain Alaska E43 / Type E3).